The chain runs to 227 residues: Phosphoribosylformylglycinamidine synthase subunit PurQ (227 aa).

Positions Lys-2 to Asn-226 constitute a Glutamine amidotransferase type-1 domain. Cys-86 functions as the Nucleophile in the catalytic mechanism. Active-site residues include His-195 and Glu-197.

In terms of assembly, part of the FGAM synthase complex composed of 1 PurL, 1 PurQ and 2 PurS subunits.

It is found in the cytoplasm. The catalysed reaction is N(2)-formyl-N(1)-(5-phospho-beta-D-ribosyl)glycinamide + L-glutamine + ATP + H2O = 2-formamido-N(1)-(5-O-phospho-beta-D-ribosyl)acetamidine + L-glutamate + ADP + phosphate + H(+). It catalyses the reaction L-glutamine + H2O = L-glutamate + NH4(+). The protein operates within purine metabolism; IMP biosynthesis via de novo pathway; 5-amino-1-(5-phospho-D-ribosyl)imidazole from N(2)-formyl-N(1)-(5-phospho-D-ribosyl)glycinamide: step 1/2. In terms of biological role, part of the phosphoribosylformylglycinamidine synthase complex involved in the purines biosynthetic pathway. Catalyzes the ATP-dependent conversion of formylglycinamide ribonucleotide (FGAR) and glutamine to yield formylglycinamidine ribonucleotide (FGAM) and glutamate. The FGAM synthase complex is composed of three subunits. PurQ produces an ammonia molecule by converting glutamine to glutamate. PurL transfers the ammonia molecule to FGAR to form FGAM in an ATP-dependent manner. PurS interacts with PurQ and PurL and is thought to assist in the transfer of the ammonia molecule from PurQ to PurL. This is Phosphoribosylformylglycinamidine synthase subunit PurQ from Listeria welshimeri serovar 6b (strain ATCC 35897 / DSM 20650 / CCUG 15529 / CIP 8149 / NCTC 11857 / SLCC 5334 / V8).